Here is a 340-residue protein sequence, read N- to C-terminus: DNA-directed RNA polymerase subunit alpha (340 aa).

The interval 1–235 (MYRNWTELIK…DQLNPFINFD (235 aa)) is alpha N-terminal domain (alpha-NTD). Positions 251 to 340 (WNPNLFRKVD…LSKQFEEENF (90 aa)) are alpha C-terminal domain (alpha-CTD).

Belongs to the RNA polymerase alpha chain family. As to quaternary structure, homodimer. The RNAP catalytic core consists of 2 alpha, 1 beta, 1 beta' and 1 omega subunit. When a sigma factor is associated with the core the holoenzyme is formed, which can initiate transcription.

The catalysed reaction is RNA(n) + a ribonucleoside 5'-triphosphate = RNA(n+1) + diphosphate. Its function is as follows. DNA-dependent RNA polymerase catalyzes the transcription of DNA into RNA using the four ribonucleoside triphosphates as substrates. The chain is DNA-directed RNA polymerase subunit alpha from Magnetococcus marinus (strain ATCC BAA-1437 / JCM 17883 / MC-1).